A 56-amino-acid polypeptide reads, in one-letter code: uncharacterized protein (56 aa).

This is an uncharacterized protein from Treponema pallidum (strain Nichols).